A 414-amino-acid polypeptide reads, in one-letter code: Ciliary microtubule-associated protein 2 (414 aa).

This Mus musculus (Mouse) protein is Ciliary microtubule-associated protein 2 (Cimap2).